The sequence spans 596 residues: Proton channel OTOP3 (596 aa).

The span at 1–21 (MGRGARAAAAQSRWGRASRAS) shows a compositional bias: low complexity. Residues 1–59 (MGRGARAAAAQSRWGRASRASVSPGRTIRSAPAVGEAQETEAAPEKENRVDVGAEERAA) are disordered. The Cytoplasmic portion of the chain corresponds to 1-88 (MGRGARAAAA…RDRQAQKAGQ (88 aa)). Phosphoserine occurs at positions 21 and 23. Residues 43–59 (APEKENRVDVGAEERAA) are compositionally biased toward basic and acidic residues. A helical membrane pass occupies residues 89 to 109 (LFSGLLALNVVFLGGAFICSM). The Extracellular portion of the chain corresponds to 110-119 (IFNKVAVTLG). Residues 120–143 (DVWILLATLKVLSLLWLLYYVAST) traverse the membrane as a helical segment. Over 144 to 159 (TRRPHAVLYQDPHAGP) the chain is Cytoplasmic. Residues 160-181 (LWVRGSLVLFGSCTFCLNIFRV) form a helical membrane-spanning segment. Topologically, residues 182-193 (GYDVSHIRCKSQ) are extracellular. A helical transmembrane segment spans residues 194–217 (LDLVFSVIEMVFIGVQTWVLWKHC). The Cytoplasmic portion of the chain corresponds to 218 to 225 (KDCVRVQT). A helical membrane pass occupies residues 226 to 248 (NFTRCGLMLTLATNLLLWVLAVT). At 249–295 (NDSMHREIEAELGILMEKSTGNETNTCLCLNATACEAFRRGFLMLYP) the chain is on the extracellular side. A helical membrane pass occupies residues 296 to 312 (FSTEYCLICCAVLFVMW). Residues 313-338 (KNVGRHVAPHMGAHPATAPFHLHGAI) are Cytoplasmic-facing. Residues 339–358 (FGPLLGLLVLLAGVCVFVLF) form a helical membrane-spanning segment. Topologically, residues 359–372 (QIEASGPAIACQYF) are extracellular. A helical membrane pass occupies residues 373-395 (TLYYAFYVAVLPTMSLACLAGTA). The Cytoplasmic segment spans residues 396-413 (IHGLEERELDTVKNPTRS). Residues 414 to 435 (LDVVLLMGAALGQMGIAYFSIV) form a helical membrane-spanning segment. The Extracellular segment spans residues 436–446 (AIVAKRPHELL). Residues 447 to 469 (NRLILAYSLLLILQHIAQNLFII) form a helical membrane-spanning segment. At 470–529 (EGLHRRPLWETVPEGLAGKQEAEPPRRGSLLELGQGLQRASLAYIHSYSHLNWKRRALKE) the chain is on the cytoplasmic side. A helical transmembrane segment spans residues 530–547 (ISLFLILCNITLWMMPAF). The Extracellular portion of the chain corresponds to 548–566 (GIHPEFENGLEKDFYGYQI). The helical transmembrane segment at 567–589 (WFAIVNFGLPLGVFYRMHSVGGL) threads the bilayer. Residues 590–596 (VEVYLGA) lie on the Cytoplasmic side of the membrane.

It belongs to the otopetrin family. In terms of assembly, homodimer.

Its subcellular location is the cell membrane. It carries out the reaction H(+)(in) = H(+)(out). With respect to regulation, activated by extracellular acidification. Activated by Zn(2+) under non-acidic conditions. In terms of biological role, proton-selective channel gated by extracellular protons. The polypeptide is Proton channel OTOP3 (Homo sapiens (Human)).